A 183-amino-acid chain; its full sequence is Large ribosomal subunit protein uL10 (183 aa).

Belongs to the universal ribosomal protein uL10 family. As to quaternary structure, part of the ribosomal stalk of the 50S ribosomal subunit. The N-terminus interacts with L11 and the large rRNA to form the base of the stalk. The C-terminus forms an elongated spine to which L12 dimers bind in a sequential fashion forming a multimeric L10(L12)X complex.

Forms part of the ribosomal stalk, playing a central role in the interaction of the ribosome with GTP-bound translation factors. The sequence is that of Large ribosomal subunit protein uL10 from Mesomycoplasma hyopneumoniae (strain 232) (Mycoplasma hyopneumoniae).